A 118-amino-acid chain; its full sequence is Large ribosomal subunit protein bL20 (118 aa).

The protein belongs to the bacterial ribosomal protein bL20 family.

In terms of biological role, binds directly to 23S ribosomal RNA and is necessary for the in vitro assembly process of the 50S ribosomal subunit. It is not involved in the protein synthesizing functions of that subunit. This is Large ribosomal subunit protein bL20 from Parvibaculum lavamentivorans (strain DS-1 / DSM 13023 / NCIMB 13966).